Reading from the N-terminus, the 308-residue chain is uncharacterized protein (308 aa).

Positions 1-17 (MKSLALLLSLLINFSIG) are cleaved as a signal peptide. N-linked (GlcNAc...) asparagine glycans are attached at residues N13, N91, N159, and N210. Residues 213-308 (DEISGGTGAG…HDNYISSFCT (96 aa)) form a disordered region. 2 stretches are compositionally biased toward gly residues: residues 217 to 231 (GGTGAGDYSGTGSGS) and 239 to 252 (SDGGSSGSGSGSGS). Residues 267–284 (NKNNNKNKNNNNNNNNYN) show a composition bias toward low complexity.

The protein resides in the secreted. This is an uncharacterized protein from Dictyostelium discoideum (Social amoeba).